Reading from the N-terminus, the 241-residue chain is 1-(5-phosphoribosyl)-5-[(5-phosphoribosylamino)methylideneamino] imidazole-4-carboxamide isomerase (241 aa).

Asp8 (proton acceptor) is an active-site residue. The Proton donor role is filled by Asp130.

It belongs to the HisA/HisF family.

It localises to the cytoplasm. The enzyme catalyses 1-(5-phospho-beta-D-ribosyl)-5-[(5-phospho-beta-D-ribosylamino)methylideneamino]imidazole-4-carboxamide = 5-[(5-phospho-1-deoxy-D-ribulos-1-ylimino)methylamino]-1-(5-phospho-beta-D-ribosyl)imidazole-4-carboxamide. It participates in amino-acid biosynthesis; L-histidine biosynthesis; L-histidine from 5-phospho-alpha-D-ribose 1-diphosphate: step 4/9. This is 1-(5-phosphoribosyl)-5-[(5-phosphoribosylamino)methylideneamino] imidazole-4-carboxamide isomerase from Leptospira borgpetersenii serovar Hardjo-bovis (strain L550).